A 659-amino-acid polypeptide reads, in one-letter code: Centrosomal protein of 76 kDa (659 aa).

Residues Ser75 and Ser83 each carry the phosphoserine modification.

This sequence belongs to the CEP76 family. In terms of assembly, interacts with CCP110 and CEP97.

It localises to the cytoplasm. The protein localises to the cytoskeleton. The protein resides in the microtubule organizing center. It is found in the centrosome. Its subcellular location is the centriole. Its function is as follows. Centrosomal protein involved in regulation of centriole duplication. Required to limit centriole duplication to once per cell cycle by preventing centriole reduplication. The sequence is that of Centrosomal protein of 76 kDa (CEP76) from Homo sapiens (Human).